Reading from the N-terminus, the 469-residue chain is Glutamate--tRNA ligase (469 aa).

Residues 11–21 carry the 'HIGH' region motif; sequence PSPTGFIHLGN. A compositionally biased stretch (basic and acidic residues) spans 118-131; it reads GEKPRYDGTWRPEP. The segment at 118–139 is disordered; that stretch reads GEKPRYDGTWRPEPGKVLPEPP. Positions 243 to 247 match the 'KMSKS' region motif; sequence KMSKR. Position 246 (Lys-246) interacts with ATP.

The protein belongs to the class-I aminoacyl-tRNA synthetase family. Glutamate--tRNA ligase type 1 subfamily. Monomer.

It is found in the cytoplasm. The catalysed reaction is tRNA(Glu) + L-glutamate + ATP = L-glutamyl-tRNA(Glu) + AMP + diphosphate. Functionally, catalyzes the attachment of glutamate to tRNA(Glu) in a two-step reaction: glutamate is first activated by ATP to form Glu-AMP and then transferred to the acceptor end of tRNA(Glu). The protein is Glutamate--tRNA ligase of Burkholderia mallei (strain NCTC 10247).